The following is a 617-amino-acid chain: Probable Xaa-Pro aminopeptidase P (617 aa).

Mn(2+) is bound by residues D414, D425, E523, and E537.

Belongs to the peptidase M24B family. It depends on Mn(2+) as a cofactor.

It carries out the reaction Release of any N-terminal amino acid, including proline, that is linked to proline, even from a dipeptide or tripeptide.. In terms of biological role, catalyzes the removal of a penultimate prolyl residue from the N-termini of peptides. In Blastomyces gilchristii (strain SLH14081) (Blastomyces dermatitidis), this protein is Probable Xaa-Pro aminopeptidase P (AMPP).